The chain runs to 222 residues: Glutathione S-transferase A5 (222 aa).

Ala2 is subject to N-acetylalanine. In terms of domain architecture, GST N-terminal spans 3 to 83 (EKPKLHYSNA…YIASKYNLYG (81 aa)). Lys4 bears the N6-succinyllysine mark. Residues Tyr9, Arg45, 54–55 (QV), and 67–68 (QT) contribute to the glutathione site. The 124-residue stretch at 85–208 (DMKERALIDM…QPGSQRKPPM (124 aa)) folds into the GST C-terminal domain.

The protein belongs to the GST superfamily. Alpha family. Homodimer. As to expression, expression not detected.

The protein resides in the cytoplasm. It catalyses the reaction RX + glutathione = an S-substituted glutathione + a halide anion + H(+). The protein is Glutathione S-transferase A5 (GSTA5) of Homo sapiens (Human).